Consider the following 221-residue polypeptide: Endo-1,4-beta-xylanase 11A (221 aa).

An N-terminal signal peptide occupies residues 1–18 (MKFATVLAFATAAGAAFA). One can recognise a GH11 domain in the interval 23–220 (SSETTEAGQL…GTGSASMSVS (198 aa)). Residue glutamate 111 is the Nucleophile of the active site. Asparagine 117 carries N-linked (GlcNAc...) asparagine glycosylation. The active-site Proton donor is glutamate 207.

The protein belongs to the glycosyl hydrolase 11 (cellulase G) family.

Its subcellular location is the secreted. It carries out the reaction Endohydrolysis of (1-&gt;4)-beta-D-xylosidic linkages in xylans.. It functions in the pathway glycan degradation; xylan degradation. Endo-1,4-beta-xylanase involved in the hydrolysis of xylan, a major structural heterogeneous polysaccharide found in plant biomass representing the second most abundant polysaccharide in the biosphere, after cellulose. The sequence is that of Endo-1,4-beta-xylanase 11A (XYN11A) from Mycosarcoma maydis (Corn smut fungus).